The primary structure comprises 108 residues: UPF0060 membrane protein YnfA (108 aa).

The Periplasmic segment spans residues 1 to 5 (MLKTT). Residues 6-26 (LLFFVTALCEIIGCFLPWLWI) form a helical membrane-spanning segment. The Cytoplasmic portion of the chain corresponds to 27-30 (KRGA). The helical transmembrane segment at 31–51 (SVWWLLPAAASLALFVWLLTL) threads the bilayer. The Periplasmic segment spans residues 52–60 (HPAASGRVY). A helical membrane pass occupies residues 61 to 81 (AAYGGVYVCTALLWLRVVDGV). The Cytoplasmic portion of the chain corresponds to 82–84 (RLT). Residues 85–105 (VYDWSGALIALCGMLIIVVGW) traverse the membrane as a helical segment. At 106–108 (GRT) the chain is on the periplasmic side.

This sequence belongs to the UPF0060 family.

Its subcellular location is the cell inner membrane. This is UPF0060 membrane protein YnfA from Salmonella typhi.